The chain runs to 328 residues: Eukaryotic translation initiation factor 3 subunit I (328 aa).

WD repeat units lie at residues 8–49 (GHER…GTYE), 50–89 (GHTG…QLYK), 145–184 (TRES…FVES), 189–228 (NSGS…VIKT), and 286–327 (GHFG…FKYT).

Belongs to the eIF-3 subunit I family. Component of the eukaryotic translation initiation factor 3 (eIF-3) complex. The eIF-3 complex appears to include tif32/eif3a, SPAC25G10.08/eif3b, tif33/eif3c, SPBC4C3.07/eif3f, tif35/eif3g and sum1/eif3i. This set of common subunits may also associate exclusively with either moe1/eif3d and int6/eif3e, or with SPAC821.05/eif3h and SPAC1751.03/eif3m. The eIF-3 complex may also include SPAC3A12.13c/eif3j.

The protein resides in the cytoplasm. It is found in the nucleus. Its function is as follows. Component of the eukaryotic translation initiation factor 3 (eIF-3) complex, which is involved in protein synthesis of a specialized repertoire of mRNAs and, together with other initiation factors, stimulates binding of mRNA and methionyl-tRNAi to the 40S ribosome. The eIF-3 complex specifically targets and initiates translation of a subset of mRNAs involved in cell proliferation. This is Eukaryotic translation initiation factor 3 subunit I (sum1) from Schizosaccharomyces pombe (strain 972 / ATCC 24843) (Fission yeast).